The sequence spans 544 residues: MALTLLRGMRTPVVARRNAGLFFTTLQSPLLSRFTMRAESARAAAPKSIQLATKEAAEQKAQGFEAVIGIETHVQLSTVTKAFCSCPYSYGSQPNSTVCPTCMGHPGTLPVLNAKVVECAVRLGLALNCEIAMTSKFDRKQYFYPDLPKGYQISQFDIPIAKEGYLDLDLPVEFGGGHRRFGVTRVHMEEDAGKLLHSESGSYSQVDLNRAGVPLLEIVSEPDMRTGIEAAEYGAELQRLVRYLGVSNGNMQEGSLRCDVNVSVRPIGQSNFGTKVEIKNMNSFSAISRAIDYEISRQILLHKEGQADQIVQETRLWDESSQKTFTMRKKEGLADYRYFPEPDLPEVVLTSEYIDEIQNSMPELPEAKRRRFENMGLSMQDVLFLANDDNVARFFDSTLEHGADAKLAANWIMGDIAAYLKNEKLSIDEIKLTPLELSELIASIRNGTISGKIGKEILIELIAKGGTVKSVIEEKDLVQIADPAAIEAMVDQVLADNPKQLEQYRSGKTKLQGFFAGQVMKASKGKANPVLLNKILGEKLKANS.

This sequence belongs to the GatB/GatE family. GatB subfamily. In terms of assembly, subunit of the heterotrimeric GatCAB amidotransferase (AdT) complex, composed of A, B and C subunits.

The protein resides in the mitochondrion. It is found in the plastid. Its subcellular location is the chloroplast. It carries out the reaction L-glutamyl-tRNA(Gln) + L-glutamine + ATP + H2O = L-glutaminyl-tRNA(Gln) + L-glutamate + ADP + phosphate + H(+). Allows the formation of correctly charged Gln-tRNA(Gln) through the transamidation of misacylated Glu-tRNA(Gln) in chloroplasts and mitochondria. The reaction takes place in the presence of glutamine and ATP through an activated gamma-phospho-Glu-tRNA(Gln). The protein is Glutamyl-tRNA(Gln) amidotransferase subunit B, chloroplastic/mitochondrial of Oryza sativa subsp. japonica (Rice).